Consider the following 184-residue polypeptide: Endoribonuclease YbeY (184 aa).

Composition is skewed to acidic residues over residues Met-1–Pro-11 and Asp-19–Asp-29. The interval Met-1 to Asp-38 is disordered. Positions 146, 150, and 156 each coordinate Zn(2+).

This sequence belongs to the endoribonuclease YbeY family. Zn(2+) is required as a cofactor.

Its subcellular location is the cytoplasm. Single strand-specific metallo-endoribonuclease involved in late-stage 70S ribosome quality control and in maturation of the 3' terminus of the 16S rRNA. The sequence is that of Endoribonuclease YbeY from Burkholderia pseudomallei (strain K96243).